Consider the following 289-residue polypeptide: Heterokaryon incompatibility protein s (289 aa).

The interval 1–227 (MSEPFGIVAG…KIDAIVGRNS (227 aa)) is globular domain. The tract at residues 218-289 (KIDAIVGRNS…EYGGKGFWDN (72 aa)) is prion domain (PrD).

As to quaternary structure, homodimer. Forms heterodimers with het-S.

It is found in the cytoplasm. Functionally, responsible for heterokaryon incompatibility, a process that ensures that during spontaneous, vegetative cell fusion only compatible cells from the same colony survive (non-self-recognition). Forms a prion for the non-Mendelian trait [het-s]. Interacts with het-S from incompatible cells to trigger a lethal reaction that prevents the formation of viable heterokaryons. It is unknown if the native, soluble protein has a cellular function. In Podospora anserina (Pleurage anserina), this protein is Heterokaryon incompatibility protein s (het-s).